Consider the following 679-residue polypeptide: Stress-70 protein, mitochondrial (679 aa).

The N-terminal 46 residues, 1 to 46, are a transit peptide targeting the mitochondrion; that stretch reads MISASRAVAARLVGAAASRGPTAARHQDGWNGLSHEAFRIVSRRDY. The interval 1–432 is interaction with NFS1; sequence MISASRAVAA…IQGGVLAGDV (432 aa). The ADP site is built by threonine 63 and asparagine 64. A nucleotide-binding domain (NBD) region spans residues 63–431; it reads TNSCVAVMEG…AIQGGVLAGD (369 aa). An N6-acetyllysine modification is found at lysine 76. A Phosphothreonine modification is found at threonine 87. Lysine 135 and lysine 138 each carry N6-acetyllysine; alternate. An N6-succinyllysine; alternate mark is found at lysine 135 and lysine 138. Lysine 143 carries the post-translational modification N6-acetyllysine. Lysine 206 is modified (N6-acetyllysine; alternate). Residue lysine 206 is modified to N6-succinyllysine; alternate. Lysine 206 carries the N6-malonyllysine; alternate modification. Lysine 234 and lysine 288 each carry N6-acetyllysine. Lysine 300 is modified (N6-acetyllysine; alternate). N6-succinyllysine; alternate is present on lysine 300. Residues glutamate 313, lysine 316, and serine 320 each contribute to the ADP site. N6-succinyllysine is present on lysine 368. ADP is bound by residues glycine 388 and arginine 391. Lysine 394 bears the N6-succinyllysine mark. Phosphoserine is present on serine 408. An interdomain linker region spans residues 432-441; that stretch reads VTDVLLLDVT. The tract at residues 432–679 is interaction with FXN and ISCU; it reads VTDVLLLDVT…QKEDQKEEKQ (248 aa). Residues 442 to 679 form a substrate-binding domain (SBD) region; that stretch reads PLSLGIETLG…QKEDQKEEKQ (238 aa). Position 513 is an omega-N-methylarginine (arginine 513). Residues lysine 567 and lysine 600 each carry the N6-acetyllysine; alternate modification. 2 positions are modified to N6-succinyllysine; alternate: lysine 567 and lysine 600. Residue lysine 610 is modified to N6-succinyllysine. Position 612 is an N6-acetyllysine (lysine 612). Lysine 646 bears the N6-acetyllysine; alternate mark. The residue at position 646 (lysine 646) is an N6-succinyllysine; alternate. The interval 656–679 is disordered; the sequence is ASEREGSGSSGTGEQKEDQKEEKQ. Over residues 669–679 the composition is skewed to basic and acidic residues; the sequence is EQKEDQKEEKQ.

It belongs to the heat shock protein 70 family. Interacts strongly with the intermediate form of FXN and weakly with its mature form. Interacts with HSCB. Associates with the mitochondrial contact site and cristae organizing system (MICOS) complex, composed of at least MICOS10/MIC10, CHCHD3/MIC19, CHCHD6/MIC25, APOOL/MIC27, IMMT/MIC60, APOO/MIC23/MIC26 and QIL1/MIC13. This complex was also known under the names MINOS or MitOS complex. The MICOS complex associates with mitochondrial outer membrane proteins SAMM50, MTX1, MTX2 and DNAJC11, mitochondrial inner membrane protein TMEM11 and with HSPA9. Interacts with DNLZ, the interaction is required to prevent self-aggregation. Interacts with TESPA1. Interacts with PDPN. Interacts with NFU1, NFS1 and ISCU. Interacts with TP53; the interaction promotes TP53 degradation. Interacts (via SBD domain) with UBXN2A; the interaction with UBXN2A inhibits HSPA9/MOT-2 interaction with and degradation of TP53, thereby promotes TP53 translocation to the nucleus. Interacts with ITPR1 AND VDAC1; this interaction couples ITPR1 to VDAC1. Component of the TIM23 mitochondrial inner membrane pre-sequence translocase complex.

The protein localises to the mitochondrion. It is found in the nucleus. Its subcellular location is the nucleolus. The protein resides in the cytoplasm. It localises to the mitochondrion matrix. It catalyses the reaction ATP + H2O = ADP + phosphate + H(+). The chaperone activity is regulated by ATP-induced allosteric coupling of the nucleotide-binding (NBD) and substrate-binding (SBD) domains. ATP binding in the nucleotide-binding pocket (NBP) leads to a conformational change in the NBD, which is transferred through the interdomain linker (IDL) to the substrate-binding domain (SBD). This elicits a reduced substrate affinity and a faster substrate exchange rate. Upon hydrolysis of ATP to ADP, the protein undergoes a conformational change that increases its affinity for substrate proteins. It cycles through repeated phases of ATP hydrolysis and nucleotide exchange, facilitating repeated cycles of substrate binding and release. Functions in collaboration with co-chaperones. Functions with the co-chaperone, DNLZ, to maintain solubility and regulate ATP hydrolysis. Nucleotide exchange factors, GRPEL1 and GRPEL2, accelerate nucleotide exchange. Mitochondrial chaperone that plays a key role in mitochondrial protein import, folding, and assembly. Plays an essential role in the protein quality control system, the correct folding of proteins, the re-folding of misfolded proteins, and the targeting of proteins for subsequent degradation. These processes are achieved through cycles of ATP binding, ATP hydrolysis, and ADP release, mediated by co-chaperones. In mitochondria, it associates with the TIM (translocase of the inner membrane) protein complex to assist in the import and folding of mitochondrial proteins. Plays an important role in mitochondrial iron-sulfur cluster (ISC) biogenesis, interacts with and stabilizes ISC cluster assembly proteins FXN, NFU1, NFS1 and ISCU. Regulates erythropoiesis via stabilization of ISC assembly. Regulates mitochondrial calcium-dependent apoptosis by coupling two calcium channels, ITPR1 and VDAC1, at the mitochondria-associated endoplasmic reticulum (ER) membrane to facilitate calcium transport from the ER lumen to the mitochondria intermembrane space, providing calcium for the downstream calcium channel MCU, which releases it into the mitochondrial matrix. Although primarily located in the mitochondria, it is also found in other cellular compartments. In the cytosol, it associates with proteins involved in signaling, apoptosis, or senescence. It may play a role in cell cycle regulation via its interaction with and promotion of degradation of TP53. May play a role in the control of cell proliferation and cellular aging. Protects against reactive oxygen species (ROS). Extracellular HSPA9 plays a cytoprotective role by preventing cell lysis following immune attack by the membrane attack complex by disrupting formation of the complex. In Pongo abelii (Sumatran orangutan), this protein is Stress-70 protein, mitochondrial.